Here is a 401-residue protein sequence, read N- to C-terminus: ATP-dependent RNA helicase eIF4A (401 aa).

The short motif at 28 to 56 is the Q motif element; sequence DNFDDMKLKGELLRGIYAYGFERPSAIQQ. One can recognise a Helicase ATP-binding domain in the interval 59-229; the sequence is IMPIVTGRDC…KKFMRDPIRI (171 aa). Position 72 to 79 (72 to 79) interacts with ATP; that stretch reads AQSGTGKT. The DEAD box motif lies at 177–180; that stretch reads DEAD. Residues 240–401 form the Helicase C-terminal domain; the sequence is GIRQFYINVE…EMPLNVADLI (162 aa).

The protein belongs to the DEAD box helicase family. eIF4A subfamily. In terms of assembly, component of the eIF4F complex, which composition varies with external and internal environmental conditions. It is composed of at least eIF4A, eIF4E and eIF4G.

It localises to the cytoplasm. The catalysed reaction is ATP + H2O = ADP + phosphate + H(+). Its function is as follows. ATP-dependent RNA helicase which is a subunit of the eIF4F complex involved in cap recognition and is required for mRNA binding to ribosome. In the current model of translation initiation, eIF4A unwinds RNA secondary structures in the 5'-UTR of mRNAs which is necessary to allow efficient binding of the small ribosomal subunit, and subsequent scanning for the initiator codon. This chain is ATP-dependent RNA helicase eIF4A (TIF1), found in Cryptococcus neoformans var. neoformans serotype D (strain B-3501A) (Filobasidiella neoformans).